A 183-amino-acid chain; its full sequence is Ribulose bisphosphate carboxylase small subunit, chloroplastic 7 (183 aa).

The transit peptide at 1-43 directs the protein to the chloroplast; the sequence is MAAAMMNKTVVVGKESVKGGVAPKVAMSRGGFLNSGIMKKDRD.

The protein belongs to the RuBisCO small chain family. Heterohexadecamer of 8 large and 8 small subunits.

The protein resides in the plastid. It localises to the chloroplast. In terms of biological role, ruBisCO catalyzes two reactions: the carboxylation of D-ribulose 1,5-bisphosphate, the primary event in carbon dioxide fixation, as well as the oxidative fragmentation of the pentose substrate. Both reactions occur simultaneously and in competition at the same active site. Although the small subunit is not catalytic it is essential for maximal activity. The sequence is that of Ribulose bisphosphate carboxylase small subunit, chloroplastic 7 from Acetabularia peniculus (Green alga).